The following is a 291-amino-acid chain: NADH-cytochrome b5 reductase 2 (291 aa).

Residues 7 to 23 (PIAATSVVAAAASSYYF) traverse the membrane as a helical segment. The FAD-binding FR-type domain occupies 41-145 (DQWVDLKLKS…KGPIIKYQWQ (105 aa)). 148-183 (LHKEITLIGAGTGITPLYQLISAINKNPEDKTKVNL) contacts FAD.

It belongs to the flavoprotein pyridine nucleotide cytochrome reductase family. It depends on FAD as a cofactor.

The protein localises to the mitochondrion outer membrane. The enzyme catalyses 2 Fe(III)-[cytochrome b5] + NADH = 2 Fe(II)-[cytochrome b5] + NAD(+) + H(+). Its function is as follows. May mediate the reduction of outer membrane cytochrome b5. This chain is NADH-cytochrome b5 reductase 2 (MCR1), found in Yarrowia lipolytica (strain CLIB 122 / E 150) (Yeast).